A 333-amino-acid chain; its full sequence is FAD-dependent monooxygenase pytG (333 aa).

A helical membrane pass occupies residues 6-26 (LPNVSVAIIGAGIGGLTLGAF). FAD-binding residues include Glu-38 and Arg-109. A glycan (N-linked (GlcNAc...) asparagine) is linked at Asn-303.

Belongs to the paxM FAD-dependent monooxygenase family. FAD serves as cofactor.

Its subcellular location is the membrane. The protein operates within secondary metabolite biosynthesis. Its function is as follows. FAD-dependent monooxygenase; part of the gene cluster that mediates the biosynthesis of pyranterreones, a family of antioxidative compounds. The first step of pyranonigrins biosynthesis is performed by the hybrid PKS-NRPS synthetase pytA that condenses 4 malonyl-CoA units ato the acetyl starter unit by the modular PKS of pytA. The acyl chain is then connected to an L-serine through the amide bond by the modular NRPS of pytA. A tetramic acid is formed and released from the PKS-NRPS pytA to give pyranterreone 5 with the help of the thioesterase pytI. Pyranterreone 5 could be methylated by pytC to afford pyranterreone 6. Both pyranterreones 5 and 6 are subsequently oxidized by the FAD-linked oxidoreductase pytB and the cytochrome P450 monooxygenase pytD to form the fused gamma-pyrone core, resulting in pyranterreones 7 and 11, respectively. The hydroxy group at C-8 of pyranterreones 7 and 11 are dehydrated by the aspartyl protease pytH to form a delta-7 double bond to give pyranterreones 3 and 1, 2 accordingly. The exo-methylene of pyranterreone 3 could be reduced into a pendant methyl by reductase pytE to provide pyranterreone 4, also known as cordylactam. Pyranterreone 4 can be reconverted to pyranterreone 3 through pytB-catalyzed dehydrogenation or further oxidized to pyranterreones 9 and 10. This is FAD-dependent monooxygenase pytG from Aspergillus terreus (strain NIH 2624 / FGSC A1156).